The following is a 1234-amino-acid chain: MTAPGPACSDTPIAGLVELALSAPTFQQLMQRAGGRPDELTLIAPASARLLVASALARQGPLLVVTATGREADDLAAELRGVFGDAVALLPSWETLPHERLSPGVDTVGTRLMALRRLAHPDDAQLGPPLGVVVTSVRSLLQPMTPQLGMMEPLTLTVGDESPFDGVVARLVELAYTRVDMVGRRGEFAVRGGILDIFAPTAEHPVRVEFWGDEITEMRMFSVADQRSIPEIDIHTLVAFACRELLLSEDVRARAAQLAARHPAAESTVTGSASDMLAKLAEGIAVDGMEAVLPVLWSDGHALLTDQLPDGTPVLVCDPEKVRTRAADLIRTGREFLEASWSVAALGTAENQAPVDVEQLGGSGFVELDQVRAAAARTGHPWWTLSQLSDESAIELDVRAAPSARGHQRDIDEIFAMLRAHIATGGYAALVAPGTGTAHRVVERLSESDTPAGMLDPGQAPKPGVVGVLQGPLRDGVIIPGANLVVITETDLTGSRVSAAEGKRLAAKRRNIVDPLALTAGDLVVHDQHGIGRFVEMVERTVGGARREYLVLEYASAKRGGGAKNTDKLYVPMDSLDQLSRYVGGQAPALSRLGGSDWANTKTKARRAVREIAGELVSLYAKRQASPGHAFSPDTPWQAELEDAFGFTETVDQLTAIEEVKADMEKPIPMDRVICGDVGYGKTEIAVRAAFKAVQDGKQVAVLVPTTLLADQHLQTFGERMSGFPVTIKGLSRFTDAAESRAVIDGLADGSVDIVIGTHRLLQTGVRWKDLGLVVVDEEQRFGVEHKEHIKSLRTHVDVLTMSATPIPRTLEMSLAGIREMSTILTPPEERYPVLTYVGPHDDKQIAAALRRELLRDGQAFYVHNRVSSIDAAAARVRELVPEARVVVAHGQMPEDLLETTVQRFWNREHDILVCTTIVETGLDISNANTLIVERADTFGLSQLHQLRGRVGRSRERGYAYFLYPPQVPLTETAYDRLATIAQNNELGAGMAVALKDLEIRGAGNVLGIEQSGHVAGVGFDLYVRLVGEALETYRDAYRAAADGQTVRTAEEPKDVRIDLPVDAHLPPDYIASDRLRLEGYRRLAAASSDREVAAVVDELTDRYGALPEPARRLAAVARLRLLCRGSGITDVTAASAATVRLSPLTLPDSAQVRLKRMYPGAHYRATTATVQVPIPRAGGLGAPRIRDVELVQMVADLITALAGKPRQHIGITNPSPPGEDGRGRNTTIKERQP.

A Helicase ATP-binding domain is found at 663–824 (DMEKPIPMDR…LAGIREMSTI (162 aa)). 676–683 (GDVGYGKT) provides a ligand contact to ATP. The DEEQ box signature appears at 777 to 780 (DEEQ). One can recognise a Helicase C-terminal domain in the interval 842–999 (DDKQIAAALR…GMAVALKDLE (158 aa)). Residues 1207–1234 (RQHIGITNPSPPGEDGRGRNTTIKERQP) form a disordered region. Residues 1220–1234 (EDGRGRNTTIKERQP) are compositionally biased toward basic and acidic residues.

In the N-terminal section; belongs to the UvrB family. This sequence in the C-terminal section; belongs to the helicase family. RecG subfamily.

The protein resides in the cytoplasm. Its function is as follows. Couples transcription and DNA repair by recognizing RNA polymerase (RNAP) stalled at DNA lesions. Mediates ATP-dependent release of RNAP and its truncated transcript from the DNA, and recruitment of nucleotide excision repair machinery to the damaged site. The chain is Transcription-repair-coupling factor from Mycobacterium bovis (strain ATCC BAA-935 / AF2122/97).